A 448-amino-acid chain; its full sequence is MEVALAVGAEASRVSRRILQKIWDPEPINDRDSNEPVWCLGRSYKLAPETPSPVTTATSPVDGAIDAAPAPIATPGTTNRQAIDTPPDSLASSFDSSLAYDNRNQDSGWPPAFLDDFGSRIWMTYRTGFEPIPRSTDPKAASALSFTMRLKTSFGDQTGFSSDTGWGCMIRSGQSLLANALLISQLGRDWRRTTDPGAERNIVALFADDARAPYSLQNFVKHGAIACGKHPGEWFGPSATARCIQALADQHESSLRIYSTGDLPDVYEDSFLATARPDGETFHPTLILVCTRLGIDKINPVYEEALISTLQMEQSIGIAGGRPSSSHYFVGVQRQWLFYLDPHHPRPALQYRENPLNYTLEELDSCHTRRLRYLHVEDMDPSMLIGFLIQDEDDWDMWKSAVKHVQGKSIINVSRHDPARGMGGARAEAIDEVETLSDDDDVDTVLEQ.

Positions 69–78 (PAPIATPGTT) are enriched in low complexity. The interval 69-90 (PAPIATPGTTNRQAIDTPPDSL) is disordered. The active-site Nucleophile is the Cys-168. Catalysis depends on residues Asp-341 and His-343.

The protein belongs to the peptidase C54 family.

Its subcellular location is the cytoplasm. The protein localises to the nucleus. The protein resides in the preautophagosomal structure. It carries out the reaction [protein]-C-terminal L-amino acid-glycyl-phosphatidylethanolamide + H2O = [protein]-C-terminal L-amino acid-glycine + a 1,2-diacyl-sn-glycero-3-phosphoethanolamine. Its function is as follows. Cysteine protease that plays a key role in cytoplasm to vacuole transport (Cvt) and autophagy by mediating both proteolytic activation and delipidation of ATG8. Required for selective autophagic degradation of the nucleus (nucleophagy) as well as for mitophagy which contributes to regulate mitochondrial quantity and quality by eliminating the mitochondria to a basal level to fulfill cellular energy requirements and preventing excess ROS production. The protease activity is required for proteolytic activation of ATG8: cleaves the C-terminal amino acid of ATG8 to reveal a C-terminal glycine. ATG8 ubiquitin-like activity requires the exposure of the glycine at the C-terminus for its conjugation to phosphatidylethanolamine (PE) and its insertion to membranes, which is necessary for autophagy. The ATG8-PE conjugate mediates tethering between adjacent membranes and stimulates membrane hemifusion, leading to expansion of the autophagosomal membrane during autophagy. In addition to the protease activity, also catalyzes deconjugation of PE-conjugated forms of ATG8 during macroautophagy: ATG8 delipidation is required to release the protein from membranes, which facilitates multiple events during macroautophagy, and especially for efficient autophagosome biogenesis, the assembly of ATG9-containing tubulovesicular clusters into phagophores/autophagosomes, and for the disassembly of PAS-associated ATG components. ATG8 delipidation by ATG4 also recycles ATG8-PE generated on inappropriate membranes to maintain a reservoir of unlipidated ATG8 that is required for autophagosome formation at the PAS. The protein is Probable cysteine protease ATG4 (ATG4) of Chaetomium globosum (strain ATCC 6205 / CBS 148.51 / DSM 1962 / NBRC 6347 / NRRL 1970) (Soil fungus).